Consider the following 310-residue polypeptide: Beta sliding clamp (310 aa).

The protein belongs to the beta sliding clamp family. As to quaternary structure, forms a ring-shaped head-to-tail homodimer around DNA which binds and tethers DNA polymerases and other proteins to the DNA. The DNA replisome complex has a single clamp-loading complex (3 tau and 1 each of delta, delta', psi and chi subunits) which binds 3 Pol III cores (1 core on the leading strand and 2 on the lagging strand) each with a beta sliding clamp dimer. Additional proteins in the replisome are other copies of gamma, psi and chi, Ssb, DNA helicase and RNA primase.

The protein resides in the cytoplasm. In terms of biological role, confers DNA tethering and processivity to DNA polymerases and other proteins. Acts as a clamp, forming a ring around DNA (a reaction catalyzed by the clamp-loading complex) which diffuses in an ATP-independent manner freely and bidirectionally along dsDNA. Initially characterized for its ability to contact the catalytic subunit of DNA polymerase III (Pol III), a complex, multichain enzyme responsible for most of the replicative synthesis in bacteria; Pol III exhibits 3'-5' exonuclease proofreading activity. The beta chain is required for initiation of replication as well as for processivity of DNA replication. The chain is Beta sliding clamp (dnaN) from Micrococcus luteus (Micrococcus lysodeikticus).